We begin with the raw amino-acid sequence, 642 residues long: Threonine--tRNA ligase (642 aa).

Residues 1-61 (MPIITLPDGS…STDSDLSIIT (61 aa)) form the TGS domain. The tract at residues 243–534 (DHRKIGKQLD…LIEEYAGKFP (292 aa)) is catalytic. Zn(2+) contacts are provided by Cys334, His385, and His511.

This sequence belongs to the class-II aminoacyl-tRNA synthetase family. As to quaternary structure, homodimer. Zn(2+) serves as cofactor.

It localises to the cytoplasm. It carries out the reaction tRNA(Thr) + L-threonine + ATP = L-threonyl-tRNA(Thr) + AMP + diphosphate + H(+). In terms of biological role, catalyzes the attachment of threonine to tRNA(Thr) in a two-step reaction: L-threonine is first activated by ATP to form Thr-AMP and then transferred to the acceptor end of tRNA(Thr). Also edits incorrectly charged L-seryl-tRNA(Thr). The sequence is that of Threonine--tRNA ligase from Shewanella denitrificans (strain OS217 / ATCC BAA-1090 / DSM 15013).